Reading from the N-terminus, the 336-residue chain is Biotin synthase (336 aa).

A Radical SAM core domain is found at 55–282 (NRVQLSKLLN…QSHVRLTAGR (228 aa)). Residues cysteine 70, cysteine 74, and cysteine 77 each contribute to the [4Fe-4S] cluster site. [2Fe-2S] cluster is bound by residues cysteine 114, cysteine 145, cysteine 205, and arginine 277.

The protein belongs to the radical SAM superfamily. Biotin synthase family. In terms of assembly, homodimer. Requires [4Fe-4S] cluster as cofactor. [2Fe-2S] cluster serves as cofactor.

It carries out the reaction (4R,5S)-dethiobiotin + (sulfur carrier)-SH + 2 reduced [2Fe-2S]-[ferredoxin] + 2 S-adenosyl-L-methionine = (sulfur carrier)-H + biotin + 2 5'-deoxyadenosine + 2 L-methionine + 2 oxidized [2Fe-2S]-[ferredoxin]. It participates in cofactor biosynthesis; biotin biosynthesis; biotin from 7,8-diaminononanoate: step 2/2. Catalyzes the conversion of dethiobiotin (DTB) to biotin by the insertion of a sulfur atom into dethiobiotin via a radical-based mechanism. The protein is Biotin synthase of Brucella anthropi (strain ATCC 49188 / DSM 6882 / CCUG 24695 / JCM 21032 / LMG 3331 / NBRC 15819 / NCTC 12168 / Alc 37) (Ochrobactrum anthropi).